Here is a 64-residue protein sequence, read N- to C-terminus: DNA gyrase inhibitor YacG (64 aa).

4 residues coordinate Zn(2+): cysteine 9, cysteine 12, cysteine 28, and cysteine 32. The segment at 42–64 (DEENAIPGAPDMSDSDGWSEEQY) is disordered. A compositionally biased stretch (acidic residues) spans 54–64 (SDSDGWSEEQY).

It belongs to the DNA gyrase inhibitor YacG family. As to quaternary structure, interacts with GyrB. Requires Zn(2+) as cofactor.

Functionally, inhibits all the catalytic activities of DNA gyrase by preventing its interaction with DNA. Acts by binding directly to the C-terminal domain of GyrB, which probably disrupts DNA binding by the gyrase. This is DNA gyrase inhibitor YacG from Vibrio vulnificus (strain YJ016).